A 113-amino-acid polypeptide reads, in one-letter code: uncharacterized protein (113 aa).

This is an uncharacterized protein from Escherichia coli O6:H1 (strain CFT073 / ATCC 700928 / UPEC).